Consider the following 388-residue polypeptide: Nuclear hormone receptor family member nhr-16 (388 aa).

A DNA-binding region (nuclear receptor) is located at residues F11 to Q86. 2 consecutive NR C4-type zinc fingers follow at residues C14 to C34 and C50 to C74. Residues P115–R387 enclose the NR LBD domain.

This sequence belongs to the nuclear hormone receptor family.

The protein resides in the nucleus. Functionally, orphan nuclear receptor. The sequence is that of Nuclear hormone receptor family member nhr-16 (nhr-16) from Caenorhabditis elegans.